We begin with the raw amino-acid sequence, 506 residues long: ESX-5 secretion system ATPase EccB5 (506 aa).

A helical membrane pass occupies residues 56-76 (VVASVSAALVICLGALLWSFI).

Belongs to the EccB family. As to quaternary structure, part of the ESX-5 / type VII secretion system (T7SS), which is composed of cytosolic and membrane components. The ESX-5 membrane complex is composed of EccB5, EccC5, EccD5 and EccE5.

The protein resides in the cell inner membrane. Its function is as follows. An ATPase. Part of the ESX-5 specialized secretion system, which is responsible for the secretion of EsxN and a number of PE_PGRS and PPE proteins, including PPE41. The sequence is that of ESX-5 secretion system ATPase EccB5 from Mycobacterium tuberculosis (strain CDC 1551 / Oshkosh).